A 346-amino-acid polypeptide reads, in one-letter code: Tetraacyldisaccharide 4'-kinase (346 aa).

62-69 provides a ligand contact to ATP; sequence TAGGTGKT.

This sequence belongs to the LpxK family.

It catalyses the reaction a lipid A disaccharide + ATP = a lipid IVA + ADP + H(+). Its pathway is glycolipid biosynthesis; lipid IV(A) biosynthesis; lipid IV(A) from (3R)-3-hydroxytetradecanoyl-[acyl-carrier-protein] and UDP-N-acetyl-alpha-D-glucosamine: step 6/6. Its function is as follows. Transfers the gamma-phosphate of ATP to the 4'-position of a tetraacyldisaccharide 1-phosphate intermediate (termed DS-1-P) to form tetraacyldisaccharide 1,4'-bis-phosphate (lipid IVA). This Xanthomonas oryzae pv. oryzae (strain MAFF 311018) protein is Tetraacyldisaccharide 4'-kinase.